Here is a 1054-residue protein sequence, read N- to C-terminus: Carbamoyl phosphate synthase large chain (1054 aa).

A carboxyphosphate synthetic domain region spans residues 1-402 (MPRRDDIRSI…SLLKAMASLE (402 aa)). Positions 129, 169, 175, 176, 208, 210, 215, 241, 242, 243, 285, and 299 each coordinate ATP. The ATP-grasp 1 domain occupies 133–328 (REAMERIGLR…IAKIAARLAV (196 aa)). The Mg(2+) site is built by Gln-285, Glu-299, and Asn-301. Positions 285, 299, and 301 each coordinate Mn(2+). Residues 403 to 531 (IETRDIQARL…YYYSTYEQED (129 aa)) are oligomerization domain. The interval 532 to 914 (EVERGENPSV…AFAKALAAAG (383 aa)) is carbamoyl phosphate synthetic domain. Positions 658–849 (GRLLRELGIP…LARLATRVLL (192 aa)) constitute an ATP-grasp 2 domain. 9 residues coordinate ATP: Arg-694, Lys-733, Glu-740, Gly-765, Val-766, His-767, Ser-768, Gln-808, and Glu-820. Gln-808, Glu-820, and Asn-822 together coordinate Mg(2+). Residues Gln-808, Glu-820, and Asn-822 each coordinate Mn(2+). Residues 915-1054 (QRLPESGRVY…SLQDLYAART (140 aa)) enclose the MGS-like domain. Positions 915–1054 (QRLPESGRVY…SLQDLYAART (140 aa)) are allosteric domain.

It belongs to the CarB family. In terms of assembly, composed of two chains; the small (or glutamine) chain promotes the hydrolysis of glutamine to ammonia, which is used by the large (or ammonia) chain to synthesize carbamoyl phosphate. Tetramer of heterodimers (alpha,beta)4. It depends on Mg(2+) as a cofactor. Requires Mn(2+) as cofactor.

The catalysed reaction is hydrogencarbonate + L-glutamine + 2 ATP + H2O = carbamoyl phosphate + L-glutamate + 2 ADP + phosphate + 2 H(+). It carries out the reaction hydrogencarbonate + NH4(+) + 2 ATP = carbamoyl phosphate + 2 ADP + phosphate + 2 H(+). It functions in the pathway amino-acid biosynthesis; L-arginine biosynthesis; carbamoyl phosphate from bicarbonate: step 1/1. The protein operates within pyrimidine metabolism; UMP biosynthesis via de novo pathway; (S)-dihydroorotate from bicarbonate: step 1/3. Large subunit of the glutamine-dependent carbamoyl phosphate synthetase (CPSase). CPSase catalyzes the formation of carbamoyl phosphate from the ammonia moiety of glutamine, carbonate, and phosphate donated by ATP, constituting the first step of 2 biosynthetic pathways, one leading to arginine and/or urea and the other to pyrimidine nucleotides. The large subunit (synthetase) binds the substrates ammonia (free or transferred from glutamine from the small subunit), hydrogencarbonate and ATP and carries out an ATP-coupled ligase reaction, activating hydrogencarbonate by forming carboxy phosphate which reacts with ammonia to form carbamoyl phosphate. The sequence is that of Carbamoyl phosphate synthase large chain from Rubrobacter xylanophilus (strain DSM 9941 / JCM 11954 / NBRC 16129 / PRD-1).